A 220-amino-acid chain; its full sequence is Probable chemoreceptor glutamine deamidase CheD 2 (220 aa).

The protein belongs to the CheD family.

It catalyses the reaction L-glutaminyl-[protein] + H2O = L-glutamyl-[protein] + NH4(+). Its function is as follows. Probably deamidates glutamine residues to glutamate on methyl-accepting chemotaxis receptors (MCPs), playing an important role in chemotaxis. In Methanosarcina acetivorans (strain ATCC 35395 / DSM 2834 / JCM 12185 / C2A), this protein is Probable chemoreceptor glutamine deamidase CheD 2.